Consider the following 313-residue polypeptide: MEPQNHTSASEFILLGLSEKPDHDPVLFSLFLCMYMITVVGNLLIILAISFDSHLHTPMYFFLANLSLVDFCLATNTVPKMLVNIQTRNKSISYPCCLTQMYFFHFFGIMDSVLIAVMAYDRFVAICHPLHYSTIMSPRLCGLLVGVPWVYSCFISLTHILLMARLVFCGKNELPHYFCDLTPLLRLSCTDTTVNKIFVLIVAGMVIATPFVCILASYARIIVAIMKVPSAGGRKKAFSTCSSHLSVVALFYGTTIGVYLCPSSVRTAVKEKASAVMYTAVTPMLNPFIYSLRNRDLKGALKKIINRKISTSS.

Residues 1–25 (MEPQNHTSASEFILLGLSEKPDHDP) are Extracellular-facing. Asparagine 5 carries N-linked (GlcNAc...) asparagine glycosylation. A helical membrane pass occupies residues 26 to 46 (VLFSLFLCMYMITVVGNLLII). Topologically, residues 47 to 54 (LAISFDSH) are cytoplasmic. A helical membrane pass occupies residues 55–75 (LHTPMYFFLANLSLVDFCLAT). Residues 76-97 (NTVPKMLVNIQTRNKSISYPCC) are Extracellular-facing. A glycan (N-linked (GlcNAc...) asparagine) is linked at asparagine 89. Cysteines 97 and 179 form a disulfide. A helical membrane pass occupies residues 98–118 (LTQMYFFHFFGIMDSVLIAVM). The Cytoplasmic portion of the chain corresponds to 119 to 142 (AYDRFVAICHPLHYSTIMSPRLCG). Residues 143–163 (LLVGVPWVYSCFISLTHILLM) traverse the membrane as a helical segment. Residues 164–196 (ARLVFCGKNELPHYFCDLTPLLRLSCTDTTVNK) are Extracellular-facing. Residues 197–217 (IFVLIVAGMVIATPFVCILAS) traverse the membrane as a helical segment. The Cytoplasmic portion of the chain corresponds to 218–244 (YARIIVAIMKVPSAGGRKKAFSTCSSH). Residues 245–265 (LSVVALFYGTTIGVYLCPSSV) form a helical membrane-spanning segment. The Extracellular segment spans residues 266–274 (RTAVKEKAS). The chain crosses the membrane as a helical span at residues 275–292 (AVMYTAVTPMLNPFIYSL). The Cytoplasmic portion of the chain corresponds to 293–313 (RNRDLKGALKKIINRKISTSS).

It belongs to the G-protein coupled receptor 1 family. Expressed in testis.

The protein localises to the cell membrane. Its function is as follows. Odorant receptor. This is Olfactory receptor 1M1 from Mus musculus (Mouse).